A 718-amino-acid chain; its full sequence is Polyribonucleotide nucleotidyltransferase (718 aa).

Mg(2+) contacts are provided by Asp493 and Asp499. The 60-residue stretch at 560 to 619 (PRMITIKINPEKIRDVIGKGGSVIRALTEETGTTIDISDDGVVTIASTSSEGMAEAKKRI) folds into the KH domain. The S1 motif domain occupies 629–697 (GQVYEGTVLK…EKGRVRLSAK (69 aa)).

This sequence belongs to the polyribonucleotide nucleotidyltransferase family. Mg(2+) serves as cofactor.

The protein resides in the cytoplasm. The catalysed reaction is RNA(n+1) + phosphate = RNA(n) + a ribonucleoside 5'-diphosphate. Functionally, involved in mRNA degradation. Catalyzes the phosphorolysis of single-stranded polyribonucleotides processively in the 3'- to 5'-direction. This Paraburkholderia phytofirmans (strain DSM 17436 / LMG 22146 / PsJN) (Burkholderia phytofirmans) protein is Polyribonucleotide nucleotidyltransferase.